Here is a 308-residue protein sequence, read N- to C-terminus: Olfactory receptor 2D2 (308 aa).

The Extracellular segment spans residues 1–25; the sequence is MRQINQTQVTEFLLLGLSDGPHTEQ. Residue asparagine 5 is glycosylated (N-linked (GlcNAc...) asparagine). Residues 26–49 form a helical membrane-spanning segment; that stretch reads LLFIVLLGVYLVTVLGNLLLISLV. Over 50–57 the chain is Cytoplasmic; that stretch reads HVDSQLHT. A helical membrane pass occupies residues 58–79; the sequence is PMYFFLCNLSLADLCFSTNIVP. The Extracellular segment spans residues 80–100; the sequence is QALVHLLSRKKVIAFTLCAAR. The helical transmembrane segment at 101–120 threads the bilayer; it reads LLFFLIFGCTQCALLAVMSY. At 121-139 the chain is on the cytoplasmic side; sequence DRYVAICNPLRYPNIMTWK. The helical transmembrane segment at 140-158 threads the bilayer; that stretch reads VCVQLATGSWTSGILVSVV. Residues 159–195 are Extracellular-facing; the sequence is DTTFILRLPYRGSNSIAHFFCEAPALLILASTDTHAS. A helical transmembrane segment spans residues 196-219; that stretch reads EMAIFLMGVVILLIPVFLILVSYG. The Cytoplasmic portion of the chain corresponds to 220–236; the sequence is RIIVTVVKMKSTVGSLK. Residues 237–259 form a helical membrane-spanning segment; it reads AFSTCGSHLMVVILFYGSAIITY. Residues 260–270 lie on the Extracellular side of the membrane; the sequence is MTPKSSKQQEK. Residues 271–290 traverse the membrane as a helical segment; the sequence is SVSVFYAIVTPMLNPLIYSL. At 291–308 the chain is on the cytoplasmic side; that stretch reads RNKDVKAALRKVATRNFP.

Belongs to the G-protein coupled receptor 1 family.

Its subcellular location is the cell membrane. In terms of biological role, odorant receptor. The sequence is that of Olfactory receptor 2D2 (OR2D2) from Homo sapiens (Human).